An 85-amino-acid polypeptide reads, in one-letter code: uncharacterized protein (85 aa).

Disordered regions lie at residues 1–22 and 41–85; these read MFAPPSSLFVPATAPAPSTSGF and EKER…SFLR. Polar residues predominate over residues 75 to 85; it reads FPSNYRGSFLR.

This is an uncharacterized protein from Dryophytes versicolor (chameleon treefrog).